The sequence spans 238 residues: uncharacterized protein (238 aa).

It belongs to the chlamydial CPn_0658/CT_538/TC_0825 family.

This is an uncharacterized protein from Chlamydia muridarum (strain MoPn / Nigg).